The sequence spans 1078 residues: Extracellular calcium-sensing receptor (1078 aa).

Positions Met-1–Ala-19 are cleaved as a signal peptide. Residues Tyr-20–Glu-610 lie on the Extracellular side of the membrane. The ligand-binding 1 (LB1) stretch occupies residues Pro-22 to Pro-188. Residues Cys-60 and Cys-101 are joined by a disulfide bond. Residue Arg-66–Trp-70 coordinates phosphate. Ca(2+) contacts are provided by Ile-81, Ser-84, Leu-87, and Leu-88. Asn-90 carries N-linked (GlcNAc...) asparagine glycosylation. Thr-100 is a Ca(2+) binding site. Asn-130 is a glycosylation site (N-linked (GlcNAc...) asparagine). Residue Thr-145 coordinates Ca(2+). L-tryptophan is bound by residues Ser-147, Ala-168, and Ser-170. Ser-170, Pro-188, Asp-190, Glu-231, and Asp-234 together coordinate Ca(2+). Residues Asn-189–Ala-324 form a ligand-binding 2 (LB2) region. Disulfide bonds link Cys-236–Cys-561, Cys-358–Cys-395, Cys-437–Cys-449, Cys-542–Cys-562, Cys-546–Cys-565, Cys-568–Cys-582, and Cys-585–Cys-598. Positions 238 and 240 each coordinate spermine. N-linked (GlcNAc...) asparagine glycosylation is found at Asn-261 and Asn-287. Residue Glu-297 participates in Ca(2+) binding. Glu-297 serves as a coordination point for L-tryptophan. N-linked (GlcNAc...) asparagine glycans are attached at residues Asn-386 and Asn-400. A phosphate-binding site is contributed by Arg-415–Ser-417. N-linked (GlcNAc...) asparagine glycosylation is found at Asn-446, Asn-468, and Asn-488. Tyr-489 contacts Ca(2+). Asn-541 carries an N-linked (GlcNAc...) asparagine glycan. The interval Cys-542–Phe-612 is cysteine-rich (CR). A Ca(2+)-binding site is contributed by Gly-557. N-linked (GlcNAc...) asparagine glycosylation is present at Asn-594. Residues Pro-611–Lys-636 form a helical membrane-spanning segment. The Cytoplasmic portion of the chain corresponds to Phe-637–Arg-648. Residues Phe-637–Arg-648 form an intracellular loop 1 (ICL1) region. The helical transmembrane segment at Glu-649 to Phe-668 threads the bilayer. Topologically, residues Ile-669–Asp-674 are extracellular. The chain crosses the membrane as a helical span at residues Trp-675–Lys-698. At Thr-699–Asn-722 the chain is on the cytoplasmic side. The interval Thr-699–Asn-722 is intracellular loop 2 (ICL2). Residues Leu-723–Thr-745 traverse the membrane as a helical segment. Topologically, residues Ala-746 to Ser-769 are extracellular. A helical membrane pass occupies residues Leu-770–Phe-789. Residues Phe-790 to Lys-805 lie on the Cytoplasmic side of the membrane. Residues Phe-790–Lys-805 form an intracellular loop 3 (ICL3) region. The helical transmembrane segment at Phe-806–Thr-828 threads the bilayer. At Tyr-829–Phe-832 the chain is on the extracellular side. The helical transmembrane segment at Val-833–Phe-854 threads the bilayer. Residues Asn-855–Ser-1078 are Cytoplasmic-facing. The tract at residues Asn-855–Ser-1078 is C-terminus. Residues Ala-880–Ser-900 form an interaction with RNF19A region. Thr-888 is modified (phosphothreonine; by PKC). Residues Arg-890 to Arg-898 are arginine-rich retention motif. Phosphoserine; by PKC is present on Ser-892. Disordered regions lie at residues Ser-892 to Lys-963, Ala-986 to Thr-1006, and Thr-1030 to Val-1055. Position 899 is a phosphoserine; by PKA (Ser-899). Positions Ser-900–Ser-918 are enriched in low complexity. The residue at position 920 (Ser-920) is a Phosphoserine. Over residues Gln-932–Pro-960 the composition is skewed to low complexity. Over residues Thr-993–Thr-1006 the composition is skewed to polar residues. Position 1061 is a phosphoserine (Ser-1061).

The protein belongs to the G-protein coupled receptor 3 family. Homodimer; disulfide-linked. Interacts with VCP. Interacts with ARRB1. Post-translationally, phosphorylation at Thr-888 by PKC impairs coupling with G(q)/G(11) G-proteins, while it does not affect G(i)/G(o)-coupling. Phosphorylation at Ser-892 by PKC and Ser-899 by PKA promote plasma membrane localization. Ubiquitinated by RNF19A; which induces proteasomal degradation. In terms of processing, N-glycosylated. As to expression, expressed in the temporal lobe, frontal lobe, parietal lobe, hippocampus, and cerebellum. Also found in kidney, lung, liver, heart, skeletal muscle, placenta.

It is found in the cell membrane. With respect to regulation, in resting state, adopts an open conformation, anion-binding promoting the inactive configuration. Upon aromatic amino acid-binding, the groove in the extracellular venus flytrap module is closed, thereby inducing the formation of a novel homodimer interface between subunits. Calcium ions stabilize the active state by enhancing homodimer interactions between membrane-proximal domains to fully activate the receptor. Upon activation, the homodimer adopts an asymmetric configuration of the 7-transmembrane region that primes one protomer for G-protein coupling. G-protein binding expands the transmembrane dimer interface; the restriction imposed by the receptor dimer, in combination with intracellular loop 2 (ICL2), enables G-protein activation by facilitating conformational transition of G-protein alpha. Coupling to different classes of G-proteins results in distinct CASR-G-protein interfaces. Activated by glucose, which acts as a positive allosteric modulator. Activated by positive allosteric modulator drugs cinacalcet, evocalcet and etelcalcetide, which are clinically used for the treatment of hyperparathyroidism and familial hypocalciuric hypercalcemia. Inhibited by NPS-2143, a negative allosteric modulator tested for the treatment of hypocalcemia. Activated by velcalcetide (AMG 416), a D-amino acid-containing peptide agonist that is being evaluated for the treatment of secondary hyperparathyroidism in chronic kidney disease patients receiving hemodialysis. Velcalcetide agonist acts by forming a disulfide bond with Cys-482. Functionally, G-protein-coupled receptor that senses changes in the extracellular concentration of calcium ions and plays a key role in maintaining calcium homeostasis. Senses fluctuations in the circulating calcium concentration: activated by elevated circulating calcium, leading to decreased parathyroid hormone (PTH) secretion in parathyroid glands. In kidneys, acts as a key regulator of renal tubular calcium resorption. Ligand binding causes a conformation change that triggers signaling via guanine nucleotide-binding proteins (G-proteins) and modulates the activity of downstream effectors. CASR is coupled with different G(q)/G(11), G(i)/G(o)- or G(s)-classes of G-proteins depending on the context. In the parathyroid and kidney, CASR signals through G(q)/G(11) and G(i)/G(o) G-proteins: G(q)/G(11) coupling activates phospholipase C-beta, releasing diacylglycerol (DAG) and inositol 1,4,5-trisphosphate (IP3) second messengers, while G(i)/G(o) coupling mediates inhibition of adenylate cyclase activity. The G-protein-coupled receptor activity is activated by a co-agonist mechanism: aromatic amino acids, such as Trp or Phe, act concertedly with divalent cations, such as calcium or magnesium, to achieve full receptor activation. Acts as an activator of the NLRP3 inflammasome via G(i)/G(o)-mediated signaling: down-regulation of cyclic AMP (cAMP) relieving NLRP3 inhibition by cAMP. Acts as a regulator of proton-sensing receptor GPR68 in a seesaw manner: CASR-mediated signaling inhibits GPR68 signaling in response to extracellular calcium, while GPR68 inhibits CASR in presence of extracellular protons. In Homo sapiens (Human), this protein is Extracellular calcium-sensing receptor.